A 257-amino-acid chain; its full sequence is Glutamate racemase (257 aa).

Substrate is bound by residues 12 to 13 (DS) and 44 to 45 (YG). Cys75 functions as the Proton donor/acceptor in the catalytic mechanism. 76-77 (NT) lines the substrate pocket. The active-site Proton donor/acceptor is the Cys185. 186–187 (TH) is a binding site for substrate.

Belongs to the aspartate/glutamate racemases family.

The enzyme catalyses L-glutamate = D-glutamate. The protein operates within cell wall biogenesis; peptidoglycan biosynthesis. Functionally, provides the (R)-glutamate required for cell wall biosynthesis. In Clostridium botulinum (strain Okra / Type B1), this protein is Glutamate racemase.